The chain runs to 524 residues: Indoleacetamide hydrolase (524 aa).

Composition is skewed to basic residues over residues Met1–Ala26 and Ala34–Lys54. Residues Met1 to Pro56 are disordered. Residues Lys133 and Ser208 each act as charge relay system in the active site. Ser232 (acyl-ester intermediate) is an active-site residue.

This sequence belongs to the amidase family.

Its pathway is plant hormone metabolism; auxin biosynthesis. Its function is as follows. Hydrolyzes indole-3-acetamide (IAM) into indole-3-acetic acid (IAA). The polypeptide is Indoleacetamide hydrolase (bam) (Bradyrhizobium diazoefficiens (strain JCM 10833 / BCRC 13528 / IAM 13628 / NBRC 14792 / USDA 110)).